The chain runs to 168 residues: Ecotin (168 aa).

The signal sequence occupies residues 1–21 (MKRLSIAITSLLMAASASTIA). Residues Cys76 and Cys113 are joined by a disulfide bond.

The protein belongs to the protease inhibitor I11 (ecotin) family. In terms of assembly, homodimer.

The protein resides in the periplasm. Functionally, general inhibitor of pancreatic serine proteases: inhibits chymotrypsin, trypsin, elastases, factor X, kallikrein as well as a variety of other proteases. In Yersinia enterocolitica serotype O:8 / biotype 1B (strain NCTC 13174 / 8081), this protein is Ecotin.